Consider the following 411-residue polypeptide: SKA complex subunit 3 (411 aa).

Ser34, Ser119, Ser138, Ser154, and Ser158 each carry phosphoserine. The tract at residues Tyr102–Asn410 is binds the NDC80 complex. A phosphothreonine mark is found at Thr189 and Thr216. A binds microtubules and contacts the microtubule-binding domain of SKA1 region spans residues Pro195 to Asn410. Ser289 bears the Phosphoserine mark. Thr297 is subject to Phosphothreonine. Residues Ser324 and Ser352 each carry the phosphoserine modification. The tract at residues Glu349 to Asn410 is required for localization to kinetochores. Phosphothreonine is present on Thr363.

The protein belongs to the SKA3 family. As to quaternary structure, component of the SKA complex, composed of SKA1, SKA2 and SKA3. The SKA complex is a homodimer organized around a central W-shaped coiled-coil structure, formed by the interacting domains of SKA1, SKA2, and SKA3, each end of the 'W' is extended further by the C-terminal microtubule-binding domains of SKA1 and SKA3; the complex forms extended structures on microtubules. Interacts with the NDC80-NUF2 heterodimer of the NDC80 complex (via coiled coils); the interaction localizes the SKA complex to the kinetochore and is required to establish kinetochore-microtubule end-on attachments. Interacts with polo-like kinase PLK1.

Its subcellular location is the cytoplasm. It is found in the cytoskeleton. It localises to the spindle. The protein resides in the chromosome. The protein localises to the centromere. Its subcellular location is the kinetochore. It is found in the microtubule organizing center. It localises to the centrosome. In terms of biological role, component of the SKA complex, a microtubule plus end-binding complex of the outer kinetochore that stabilizes spindle microtubule-kinetochore attachments, promotes alignment of chromosomes at the mitotic spindle equator (chromosome congression) and assists suppression of the spindle assembly checkpoint. Kinetochores, consisting of a centromere-associated inner segment and a microtubule-contacting outer segment, play a crucial role in chromosome segregation by mediating the physical connection between centromeric DNA and spindle microtubules. The outer kinetochore is made up of the ten-subunit KMN network complex, comprising the MIS12, NDC80 and KNL1 complexes, and auxiliary microtubule-associated components such as the SKA complex; together they connect the outer kinetochore with the inner kinetochore, bind microtubules, and mediate interactions with mitotic checkpoint proteins that delay anaphase until chromosomes are bioriented on the spindle. The SKA complex is loaded onto bioriented kinetochores and it facilitates chromosome congression by stabilizing microtubules together with MAPRE1, and end-on attachment of the NDC80 complex to depolymerizing spindle microtubules, thereby assisting the poleward-moving kinetochore in withstanding microtubule pulling forces. The complex associates with dynamic microtubule plus-ends and can track both depolymerizing and elongating microtubules. The complex recruits protein phosphatase 1 (PP1) to the kinetochore in prometaphase and metaphase, to oppose spindle assembly checkpoint signaling and promote the onset of anaphase. Within the complex, binds microtubules but with a much lower affinity than SKA1. Promotes stability of the polo-like kinase PLK1 protein. During meiosis the SKA complex stabilizes the meiotic spindle and is required for its migration to the cortex. This is SKA complex subunit 3 (Ska3) from Mus musculus (Mouse).